A 355-amino-acid chain; its full sequence is D-alanine--D-alanine ligase (355 aa).

Residues 143–350 (KIIFSNLKIP…IEQLVAKLVD (208 aa)) enclose the ATP-grasp domain. ATP is bound at residue 178-233 (LKKLNFPVFVKPSNSGSSLGISKVINKSEIIPALEKARGIDPSILIEEGLEVREIE). Asp-303, Glu-317, and Asn-319 together coordinate Mg(2+).

It belongs to the D-alanine--D-alanine ligase family. Mg(2+) is required as a cofactor. It depends on Mn(2+) as a cofactor.

It localises to the cytoplasm. The enzyme catalyses 2 D-alanine + ATP = D-alanyl-D-alanine + ADP + phosphate + H(+). The protein operates within cell wall biogenesis; peptidoglycan biosynthesis. In terms of biological role, cell wall formation. The chain is D-alanine--D-alanine ligase from Prochlorococcus marinus (strain AS9601).